The following is an 88-amino-acid chain: Large ribosomal subunit protein bL27 (88 aa).

A disordered region spans residues 1–24; it reads MATKKSGGSSGNGRDSRGRRLGVK.

Belongs to the bacterial ribosomal protein bL27 family.

In Ehrlichia chaffeensis (strain ATCC CRL-10679 / Arkansas), this protein is Large ribosomal subunit protein bL27.